The sequence spans 657 residues: Glycogen debranching enzyme (657 aa).

Catalysis depends on D336, which acts as the Nucleophile. E371 (proton donor) is an active-site residue. The tract at residues 460-479 (ANGEENRDGTNNNYSNNHGK) is disordered.

This sequence belongs to the glycosyl hydrolase 13 family.

It catalyses the reaction Hydrolysis of (1-&gt;6)-alpha-D-glucosidic linkages to branches with degrees of polymerization of three or four glucose residues in limit dextrin.. Its pathway is glycan degradation; glycogen degradation. Its function is as follows. Removes maltotriose and maltotetraose chains that are attached by 1,6-alpha-linkage to the limit dextrin main chain, generating a debranched limit dextrin. The chain is Glycogen debranching enzyme from Escherichia coli O81 (strain ED1a).